A 600-amino-acid polypeptide reads, in one-letter code: Elongation factor 4 (600 aa).

The region spanning 4–186 is the tr-type G domain; the sequence is SKIRNFSIIA…AIVDKIPPPS (183 aa). GTP is bound by residues 16-21 and 133-136; these read DHGKST and NKID.

Belongs to the TRAFAC class translation factor GTPase superfamily. Classic translation factor GTPase family. LepA subfamily.

It localises to the cell membrane. It catalyses the reaction GTP + H2O = GDP + phosphate + H(+). Its function is as follows. Required for accurate and efficient protein synthesis under certain stress conditions. May act as a fidelity factor of the translation reaction, by catalyzing a one-codon backward translocation of tRNAs on improperly translocated ribosomes. Back-translocation proceeds from a post-translocation (POST) complex to a pre-translocation (PRE) complex, thus giving elongation factor G a second chance to translocate the tRNAs correctly. Binds to ribosomes in a GTP-dependent manner. This is Elongation factor 4 from Mycoplasma capricolum subsp. capricolum (strain California kid / ATCC 27343 / NCTC 10154).